A 146-amino-acid chain; its full sequence is Ribonuclease H (146 aa).

The RNase H type-1 domain maps to 1-141; that stretch reads MEKIDIFTDG…ADALANRGVE (141 aa). Residues aspartate 9, glutamate 47, aspartate 69, and aspartate 133 each coordinate Mg(2+).

The protein belongs to the RNase H family. In terms of assembly, monomer. The cofactor is Mg(2+).

Its subcellular location is the cytoplasm. It carries out the reaction Endonucleolytic cleavage to 5'-phosphomonoester.. In terms of biological role, endonuclease that specifically degrades the RNA of RNA-DNA hybrids. The protein is Ribonuclease H of Herminiimonas arsenicoxydans.